A 129-amino-acid polypeptide reads, in one-letter code: Glycoprotein hormone alpha-2 (129 aa).

Positions 1 to 23 (MPMASPQTLVLYLLVLAVTEAWG) are cleaved as a signal peptide. Disulfide bonds link Cys-31–Cys-89, Cys-48–Cys-103, Cys-57–Cys-119, and Cys-61–Cys-121. 2 N-linked (GlcNAc...) asparagine glycosylation sites follow: Asn-37 and Asn-81.

The protein belongs to the glycoprotein hormones subunit alpha family. Heterodimer with GPHB5; this heterodimer interacts with thyroid-stimulating hormone receptor (TSHR), and hence stimulates cAMP production. Post-translationally, glycosylated. As to expression, found in a variety of tissues.

The protein resides in the secreted. Functionally, functions as a heterodimeric glycoprotein hormone with GPHB5 able to bind and activate the thyroid-stimulating hormone receptor (TSHR), leading to increased cAMP production. Plays a central role in controlling thyroid cell metabolism. The protein is Glycoprotein hormone alpha-2 (GPHA2) of Homo sapiens (Human).